The sequence spans 158 residues: 6,7-dimethyl-8-ribityllumazine synthase (158 aa).

5-amino-6-(D-ribitylamino)uracil-binding positions include F22, 57–59 (AYE), and 81–83 (AVI). 86–87 (GT) contributes to the (2S)-2-hydroxy-3-oxobutyl phosphate binding site. The Proton donor role is filled by H89. A 5-amino-6-(D-ribitylamino)uracil-binding site is contributed by F114. R128 contacts (2S)-2-hydroxy-3-oxobutyl phosphate.

Belongs to the DMRL synthase family. Forms an icosahedral capsid composed of 60 subunits, arranged as a dodecamer of pentamers.

It catalyses the reaction (2S)-2-hydroxy-3-oxobutyl phosphate + 5-amino-6-(D-ribitylamino)uracil = 6,7-dimethyl-8-(1-D-ribityl)lumazine + phosphate + 2 H2O + H(+). The protein operates within cofactor biosynthesis; riboflavin biosynthesis; riboflavin from 2-hydroxy-3-oxobutyl phosphate and 5-amino-6-(D-ribitylamino)uracil: step 1/2. Functionally, catalyzes the formation of 6,7-dimethyl-8-ribityllumazine by condensation of 5-amino-6-(D-ribitylamino)uracil with 3,4-dihydroxy-2-butanone 4-phosphate. This is the penultimate step in the biosynthesis of riboflavin. In Pseudoalteromonas atlantica (strain T6c / ATCC BAA-1087), this protein is 6,7-dimethyl-8-ribityllumazine synthase.